The primary structure comprises 252 residues: Chitooligosaccharide deacetylase (252 aa).

Mg(2+) is bound by residues histidine 61 and histidine 125.

Belongs to the YdjC deacetylase family. ChbG subfamily. In terms of assembly, homodimer. Mg(2+) serves as cofactor.

It is found in the cytoplasm. It catalyses the reaction N,N'-diacetylchitobiose + H2O = N-acetyl-beta-D-glucosaminyl-(1-&gt;4)-D-glucosamine + acetate. The catalysed reaction is diacetylchitobiose-6'-phosphate + H2O = N'-monoacetylchitobiose-6'-phosphate + acetate. It participates in glycan degradation; chitin degradation. Its function is as follows. Involved in the degradation of chitin. ChbG is essential for growth on the acetylated chitooligosaccharides chitobiose and chitotriose but is dispensable for growth on cellobiose and chitosan dimer, the deacetylated form of chitobiose. Deacetylation of chitobiose-6-P and chitotriose-6-P is necessary for both the activation of the chb promoter by the regulatory protein ChbR and the hydrolysis of phosphorylated beta-glucosides by the phospho-beta-glucosidase ChbF. Catalyzes the removal of only one acetyl group from chitobiose-6-P to yield monoacetylchitobiose-6-P, the inducer of ChbR and the substrate of ChbF. In Escherichia coli O139:H28 (strain E24377A / ETEC), this protein is Chitooligosaccharide deacetylase.